The following is a 376-amino-acid chain: 5-hydroxytryptamine receptor 1D (376 aa).

The interval 1-22 is disordered; sequence MSPPNQSEEGLPQEASNRSLNA. N5, N17, and N21 each carry an N-linked (GlcNAc...) asparagine glycan. The next 3 helical transmembrane spans lie at 39–64, 76–97, and 110–134; these read VSLV…TTIL, LIGS…ISIA, and LCDI…VIAL. A disulfide bond links C111 and C188. 2 residues coordinate serotonin: D118 and C122. The short motif at 135 to 137 is the DRY motif; important for ligand-induced conformation changes element; that stretch reads DRY. 4 helical membrane passes run 155 to 176, 195 to 218, 300 to 325, and 335 to 358; these read AGAM…PLFW, ISYT…ILYS, KTLG…VLPI, and ALFD…YTVF. S320 contacts serotonin. An NPxxY motif; important for ligand-induced conformation changes and signaling motif is present at residues 351-355; the sequence is NPIIY.

It belongs to the G-protein coupled receptor 1 family. Homodimer. Heterodimer with HTR1B.

The protein resides in the cell membrane. Its function is as follows. G-protein coupled receptor for 5-hydroxytryptamine (serotonin). Also functions as a receptor for ergot alkaloid derivatives, various anxiolytic and antidepressant drugs and other psychoactive substances. Ligand binding causes a conformation change that triggers signaling via guanine nucleotide-binding proteins (G proteins) and modulates the activity of downstream effectors, such as adenylate cyclase. HTR1D is coupled to G(i)/G(o) G alpha proteins and mediates inhibitory neurotransmission by inhibiting adenylate cyclase activity. Regulates the release of 5-hydroxytryptamine in the brain, and thereby affects neural activity. May also play a role in regulating the release of other neurotransmitters. May play a role in vasoconstriction. The polypeptide is 5-hydroxytryptamine receptor 1D (HTR1D) (Cavia porcellus (Guinea pig)).